A 524-amino-acid chain; its full sequence is Methyl-CpG-binding domain-containing protein 8 (524 aa).

Over residues 45–60 (CSSLSPSSSASLAASA) the composition is skewed to low complexity. A disordered region spans residues 45–151 (CSSLSPSSSA…EEELEDNEGQ (107 aa)). Residues 75-84 (FNESAGSRKQ) are compositionally biased toward polar residues. The segment covering 106–116 (RQRDDSSREEQ) has biased composition (basic and acidic residues). Acidic residues predominate over residues 136–149 (EEEDEGEEELEDNE). The MBD domain maps to 334-406 (VVNACDYGGY…QHYYLQSDNK (73 aa)).

In terms of tissue distribution, expressed in shoot meristems, roots (vasculature and tips), hypocotyls (vasculature), cotyledons (vasculature and hydathodes), young leaves, buds, flowers and stems. Detected in stomata.

It localises to the nucleus. Its function is as follows. Probable transcriptional regulator. May regulates developmental traits such as flowering time. In Arabidopsis thaliana (Mouse-ear cress), this protein is Methyl-CpG-binding domain-containing protein 8 (MBD8).